A 292-amino-acid chain; its full sequence is Coatomer subunit epsilon (292 aa).

The protein belongs to the COPE family. Oligomeric complex that consists of at least the alpha, beta, beta', gamma, delta, epsilon and zeta subunits.

Its subcellular location is the cytoplasm. The protein localises to the golgi apparatus membrane. It localises to the cytoplasmic vesicle. The protein resides in the COPI-coated vesicle membrane. In terms of biological role, the coatomer is a cytosolic protein complex that binds to dilysine motifs and reversibly associates with Golgi non-clathrin-coated vesicles, which further mediate biosynthetic protein transport from the ER, via the Golgi up to the trans Golgi network. The coatomer complex is required for budding from Golgi membranes, and is essential for the retrograde Golgi-to-ER transport of dilysine-tagged proteins. This Caenorhabditis elegans protein is Coatomer subunit epsilon (cope-1).